An 89-amino-acid polypeptide reads, in one-letter code: HssA/B-like protein 10 (89 aa).

The protein belongs to the hssA/B family.

This chain is HssA/B-like protein 10 (hssl10), found in Dictyostelium discoideum (Social amoeba).